Reading from the N-terminus, the 115-residue chain is Nitrogenase iron-iron protein delta chain (115 aa).

As to quaternary structure, hexamer of two alpha, two beta, and two delta chains. Iron-sulfur cluster serves as cofactor.

It carries out the reaction N2 + 8 reduced [2Fe-2S]-[ferredoxin] + 16 ATP + 16 H2O = H2 + 8 oxidized [2Fe-2S]-[ferredoxin] + 2 NH4(+) + 16 ADP + 16 phosphate + 6 H(+). Its function is as follows. The key enzymatic reactions in nitrogen fixation are catalyzed by the nitrogenase complex, which has 2 components: the iron protein (component 2) and a component 1 which is either a molybdenum-iron protein, a vanadium-iron, or an iron-iron protein. In Rhodobacter capsulatus (Rhodopseudomonas capsulata), this protein is Nitrogenase iron-iron protein delta chain (anfG).